Here is a 522-residue protein sequence, read N- to C-terminus: Neutral amino acid uniporter 4 (522 aa).

Helical transmembrane passes span 115-135 (AGVLLGPISLLFFGIISIHCM), 181-201 (LVDWFLVVTQLGFCSVYFVFL), 226-246 (SLDLRIYMFSFLPLIIPLVFI), 255-275 (LSFFANVSMAISLLIVYQYVI), 293-313 (YPLFFGTAIFAFEGIGVVLPL), 329-349 (IGMAIVTTLYISLATLGYFCF), 377-397 (FGIYVTYAIQYYVPAEIILPA), 409-429 (LCEFTMRFFLVCLTCAVAVLI), 435-455 (VISFVGAVSSSTLALILPPLV), and 467-487 (PWVIMKDVGIAVIGFVGFIAG). An N-linked (GlcNAc...) asparagine glycan is attached at N515.

Belongs to the amino acid/polyamine transporter 2 family.

The protein localises to the lysosome membrane. It carries out the reaction L-tryptophan(in) = L-tryptophan(out). It catalyses the reaction L-alanine(in) = L-alanine(out). The enzyme catalyses L-proline(in) = L-proline(out). In terms of biological role, uniporter that mediates the transport of neutral amino acids like L-tryptophan, proline and alanine. The transport activity is sodium ions-independent, electroneutral and therefore functions via facilitated diffusion. The chain is Neutral amino acid uniporter 4 from Xenopus laevis (African clawed frog).